The following is a 642-amino-acid chain: Kinesin-like protein KIF12 (642 aa).

Basic and acidic residues predominate over residues 1-13 (MEERGSPDGDPAR). Residues 1–25 (MEERGSPDGDPARNLEQGPEGSETP) form a disordered region. Ser-6 carries the phosphoserine modification. The Kinesin motor domain maps to 25-360 (PIQVVLRVRP…LRYASRAQRI (336 aa)). An ATP-binding site is contributed by 104–111 (GQTGSGKT). A Phosphoserine modification is found at Ser-369. A coiled-coil region spans residues 376–465 (QQVENELLRL…QVHDLERRLL (90 aa)). Disordered stretches follow at residues 531 to 561 (GHISQSVWPPPWAPPPSPGSAKPPRERSQSD) and 579 to 642 (PSAP…LSSC). Over residues 538–548 (WPPPWAPPPSP) the composition is skewed to pro residues. Residues 610 to 642 (TLTQQINSSLHLSQRQPQPSEDTQSPGQGLSSC) are compositionally biased toward polar residues. Ser-634 carries the post-translational modification Phosphoserine.

The protein belongs to the TRAFAC class myosin-kinesin ATPase superfamily. Kinesin family. As to expression, expressed in the liver.

The protein resides in the cytoplasm. Its subcellular location is the cytoskeleton. The chain is Kinesin-like protein KIF12 (Kif12) from Mus musculus (Mouse).